The chain runs to 387 residues: 8-amino-7-oxononanoate synthase (387 aa).

109–110 contacts pyridoxal 5'-phosphate; the sequence is GY. Residue H134 participates in substrate binding. S182, H214, and T242 together coordinate pyridoxal 5'-phosphate. The residue at position 245 (K245) is an N6-(pyridoxal phosphate)lysine. T359 provides a ligand contact to substrate.

Belongs to the class-II pyridoxal-phosphate-dependent aminotransferase family. BioF subfamily. Homodimer. Pyridoxal 5'-phosphate is required as a cofactor.

It catalyses the reaction 6-carboxyhexanoyl-[ACP] + L-alanine + H(+) = (8S)-8-amino-7-oxononanoate + holo-[ACP] + CO2. It participates in cofactor biosynthesis; biotin biosynthesis. Its function is as follows. Catalyzes the decarboxylative condensation of pimeloyl-[acyl-carrier protein] and L-alanine to produce 8-amino-7-oxononanoate (AON), [acyl-carrier protein], and carbon dioxide. In Haemophilus ducreyi (strain 35000HP / ATCC 700724), this protein is 8-amino-7-oxononanoate synthase.